A 331-amino-acid chain; its full sequence is MDEFQSKAFEVGEEIEPDDNEPLTGEEYLQRVKWHSNRCPSVVVADIDYSKIKVTIPSNSYFTLPPSITKCKKELLPTPTWEKEFLNDFSEFRQKLQYIKSNRPSNNNNNNNNNNNNNNNNNNNNNLIPQLPHINDKRYWYIFCFGSNGNNNNNNNDIKMKDFNDNQEDDDDDENNEDYEYNENKEEEEEEEEEEEEEEEVEEEEEEEEEEEEVVDYSTKKPTLGNKPTMDILCRLDHVLTVALVNYHIEWLEKREFTQERSYWLYMLLSLLEKPIDPDTCSNLRSCIRRLSVFRSKITNLNDPNLPSINILFTIIAKYFDQLEPSDILYL.

Disordered regions lie at residues 1–23 (MDEF…NEPL), 101–130 (SNRP…LIPQ), and 151–222 (NNNN…TKKP). Residues 11-21 (VGEEIEPDDNE) show a composition bias toward acidic residues. Positions 106–126 (NNNNNNNNNNNNNNNNNNNNN) are enriched in low complexity. Residues 165 to 215 (DNQEDDDDDENNEDYEYNENKEEEEEEEEEEEEEEEVEEEEEEEEEEEEVV) are compositionally biased toward acidic residues. Residues 173–224 (DENNEDYEYNENKEEEEEEEEEEEEEEEVEEEEEEEEEEEEVVDYSTKKPTL) are a coiled coil.

It belongs to the gemin-2 family.

It localises to the nucleus. Its subcellular location is the gem. The protein localises to the cytoplasm. In terms of biological role, the SMN complex catalyzes the assembly of small nuclear ribonucleoproteins (snRNPs), the building blocks of the spliceosome, and thereby plays an important role in the splicing of cellular pre-mRNAs. Most spliceosomal snRNPs contain a common set of Sm proteins SNRPB, SNRPD1, SNRPD2, SNRPD3, SNRPE, SNRPF and SNRPG that assemble in a heptameric protein ring on the Sm site of the small nuclear RNA to form the core snRNP (Sm core). In the cytosol, the Sm proteins SNRPD1, SNRPD2, SNRPE, SNRPF and SNRPG (5Sm) are trapped in an inactive 6S pICln-Sm complex by the chaperone CLNS1A that controls the assembly of the core snRNP. To assemble core snRNPs, the SMN complex accepts the trapped 5Sm proteins from CLNS1A. Binding of snRNA inside 5Sm ultimately triggers eviction of the SMN complex, thereby allowing binding of SNRPD3 and SNRPB to complete assembly of the core snRNP. Within the SMN complex, GEMIN2 constrains the conformation of 5Sm, thereby promoting 5Sm binding to snRNA containing the snRNP code (a nonameric Sm site and a 3'-adjacent stem-loop), thus preventing progression of assembly until a cognate substrate is bound. May play an essential role in spliceosomal snRNP assembly in the cytoplasm and may be required for pre-mRNA splicing in the nucleus. In Dictyostelium discoideum (Social amoeba), this protein is Gem-associated protein 2 (gemin2).